A 962-amino-acid chain; its full sequence is Translation initiation factor IF-2 (962 aa).

Disordered regions lie at residues 122 to 263 (EVGV…EPAR), 293 to 327 (TEEV…TRRK), and 341 to 362 (IAAQ…AKEP). Positions 156–173 (AVEPQTVVPPVAAPAAEV) are enriched in low complexity. A compositionally biased stretch (basic and acidic residues) spans 188–202 (KPPEEKETKVKHAEP). Residues 244 to 256 (RPKKAKKRRRKKV) show a composition bias toward basic residues. Composition is skewed to basic and acidic residues over residues 308 to 327 (RPEE…TRRK) and 344 to 362 (QDDR…AKEP). Positions 455 to 624 (RRPPVITVMG…LLQAELLELK (170 aa)) constitute a tr-type G domain. The G1 stretch occupies residues 464–471 (GHVDHGKT). 464 to 471 (GHVDHGKT) is a binding site for GTP. The interval 489 to 493 (GITQH) is G2. A G3 region spans residues 510–513 (DTPG). GTP-binding positions include 510–514 (DTPGH) and 564–567 (NKVD). Residues 564 to 567 (NKVD) are G4. The segment at 600 to 602 (SAK) is G5.

Belongs to the TRAFAC class translation factor GTPase superfamily. Classic translation factor GTPase family. IF-2 subfamily.

The protein localises to the cytoplasm. Its function is as follows. One of the essential components for the initiation of protein synthesis. Protects formylmethionyl-tRNA from spontaneous hydrolysis and promotes its binding to the 30S ribosomal subunits. Also involved in the hydrolysis of GTP during the formation of the 70S ribosomal complex. The polypeptide is Translation initiation factor IF-2 (Syntrophobacter fumaroxidans (strain DSM 10017 / MPOB)).